A 101-amino-acid chain; its full sequence is uncharacterized protein (101 aa).

Residues 77–99 (VFSFMNGFTDGCICGTIIILCLI) form a helical membrane-spanning segment.

It is found in the membrane. This is an uncharacterized protein from Acanthamoeba polyphaga mimivirus (APMV).